A 206-amino-acid polypeptide reads, in one-letter code: Orotate phosphoribosyltransferase (206 aa).

5-phospho-alpha-D-ribose 1-diphosphate contacts are provided by residues arginine 97, lysine 98, lysine 101, and 125 to 133 (NDVIASGRS). Residue arginine 157 participates in orotate binding.

This sequence belongs to the purine/pyrimidine phosphoribosyltransferase family. PyrE subfamily. In terms of assembly, homodimer. Mg(2+) serves as cofactor.

The catalysed reaction is orotidine 5'-phosphate + diphosphate = orotate + 5-phospho-alpha-D-ribose 1-diphosphate. It participates in pyrimidine metabolism; UMP biosynthesis via de novo pathway; UMP from orotate: step 1/2. Its function is as follows. Catalyzes the transfer of a ribosyl phosphate group from 5-phosphoribose 1-diphosphate to orotate, leading to the formation of orotidine monophosphate (OMP). This Chlamydia caviae (strain ATCC VR-813 / DSM 19441 / 03DC25 / GPIC) (Chlamydophila caviae) protein is Orotate phosphoribosyltransferase.